The chain runs to 852 residues: G-type lectin S-receptor-like serine/threonine-protein kinase At4g03230 (852 aa).

The N-terminal stretch at 1–19 (MILSVFFYMFLLHIRRLDC) is a signal peptide. The 135-residue stretch at 20–154 (FVAVQDSKTL…GNEANVVWQS (135 aa)) folds into the Bulb-type lectin domain. The Extracellular segment spans residues 20–444 (FVAVQDSKTL…RGRGRYGEAK (425 aa)). 6 N-linked (GlcNAc...) asparagine glycosylation sites follow: N37, N59, N171, N187, N234, and N243. The 37-residue stretch at 285 to 321 (PRDECSVYNACGNFGSCNSKNEEMCKCLPGFRPNFLE) folds into the EGF-like domain. Cystine bridges form between C289–C301 and C295–C309. In terms of domain architecture, PAN spans 339 to 426 (CGKDGVVVGD…SRNVFIRVAV (88 aa)). N352 carries N-linked (GlcNAc...) asparagine glycosylation. Disulfide bonds link C373–C400 and C377–C383. The chain crosses the membrane as a helical span at residues 445–465 (TPVVLIIVVTFTSAAILVVLS). Residues 466-852 (STASYVFLQR…ELTITLEDGR (387 aa)) are Cytoplasmic-facing. Residues 532–819 (FSNANKLGQG…TLPTPKQPAF (288 aa)) form the Protein kinase domain. ATP contacts are provided by residues 538–546 (LGQGGFGPV) and K560. At S566 the chain carries Phosphoserine. The interval 621 to 638 (KLCQRLDWKMRCNIILGI) is caM-binding. Residue D657 is the Proton acceptor of the active site. 2 positions are modified to phosphoserine: S661 and S674. T691 carries the post-translational modification Phosphothreonine. The tract at residues 826–852 (SSSKASSSTKPETCSENELTITLEDGR) is disordered. 2 positions are modified to phosphoserine: S831 and S840. Residues 834–845 (TKPETCSENELT) show a composition bias toward polar residues. Phosphothreonine is present on T847.

Belongs to the protein kinase superfamily. Ser/Thr protein kinase family.

The protein localises to the cell membrane. The enzyme catalyses L-seryl-[protein] + ATP = O-phospho-L-seryl-[protein] + ADP + H(+). The catalysed reaction is L-threonyl-[protein] + ATP = O-phospho-L-threonyl-[protein] + ADP + H(+). The chain is G-type lectin S-receptor-like serine/threonine-protein kinase At4g03230 from Arabidopsis thaliana (Mouse-ear cress).